An 87-amino-acid polypeptide reads, in one-letter code: MVNMKASMFLTFAGLVLLFVVCYASESEEKEFPKGMLSSIFAVDNDFKQEERDCAGYMRECKEELCCSGYVCSSRWKWCVLPAPWRR.

Residues 1-24 (MVNMKASMFLTFAGLVLLFVVCYA) form the signal peptide. Positions 25–52 (SESEEKEFPKGMLSSIFAVDNDFKQEER) are excised as a propeptide. 3 disulfides stabilise this stretch: Cys54–Cys67, Cys61–Cys72, and Cys66–Cys79.

This sequence belongs to the neurotoxin 10 (Hwtx-1) family. 51 (Hntx-8) subfamily. Hntx-8 sub-subfamily. In terms of tissue distribution, expressed by the venom gland.

The protein localises to the secreted. Functionally, ion channel inhibitor. This Cyriopagopus hainanus (Chinese bird spider) protein is U3-theraphotoxin-Hhn1e.